A 599-amino-acid chain; its full sequence is Beta-(1--&gt;2)glucan export ATP-binding/permease protein NdvA (599 aa).

Positions 21 to 301 constitute an ABC transmembrane type-1 domain; the sequence is TITMCVASVL…ISAFINQTVT (281 aa). Helical transmembrane passes span 22–42, 55–75, 156–176, 248–268, and 276–296; these read ITMCVASVLVALVTLAEPVLF, IFSPLLMWAALGGFNIMAAVF, MRMSLVLIVLGVIYVMIGQLV, MASTFSMVVVLVLGAYFVTKG, and IAFIGFAQLMIGRLDQISAFI. The ABC transporter domain occupies 335-569; the sequence is IVFDNVTYEF…GGRFSDLLRA (235 aa). 368 to 375 serves as a coordination point for ATP; sequence GPTGAGKT.

The protein belongs to the ABC transporter superfamily. Beta-(1--&gt;2)glucan exporter (TC 3.A.1.108.1) family. As to quaternary structure, homodimer.

It is found in the cell inner membrane. It catalyses the reaction [(1-&gt;2)-beta-D-glucosyl](n)(in) + ATP + H2O = [(1-&gt;2)-beta-D-glucosyl](n)(out) + ADP + phosphate + H(+). In terms of biological role, involved in beta-(1--&gt;2)glucan export. Transmembrane domains (TMD) form a pore in the inner membrane and the ATP-binding domain (NBD) is responsible for energy generation. This chain is Beta-(1--&gt;2)glucan export ATP-binding/permease protein NdvA, found in Brucella melitensis biotype 1 (strain ATCC 23456 / CCUG 17765 / NCTC 10094 / 16M).